The chain runs to 180 residues: Large ribosomal subunit protein uL5 (180 aa).

This sequence belongs to the universal ribosomal protein uL5 family. Part of the 50S ribosomal subunit; part of the 5S rRNA/L5/L18/L25 subcomplex. Contacts the 5S rRNA and the P site tRNA. Forms a bridge to the 30S subunit in the 70S ribosome.

This is one of the proteins that bind and probably mediate the attachment of the 5S RNA into the large ribosomal subunit, where it forms part of the central protuberance. In the 70S ribosome it contacts protein S13 of the 30S subunit (bridge B1b), connecting the 2 subunits; this bridge is implicated in subunit movement. Contacts the P site tRNA; the 5S rRNA and some of its associated proteins might help stabilize positioning of ribosome-bound tRNAs. The polypeptide is Large ribosomal subunit protein uL5 (Lactobacillus helveticus (strain DPC 4571)).